The chain runs to 390 residues: 4-hydroxycoumarin synthase 1 (390 aa).

The active site involves C161.

It belongs to the thiolase-like superfamily. Chalcone/stilbene synthases family. In terms of assembly, homodimer.

The enzyme catalyses 2-hydroxybenzoyl-CoA + malonyl-CoA = 4-hydroxycoumarin + CO2 + 2 CoA. Functionally, type III polyketide synthase involved preferentially in the biosynthesis of 4-hydroxycoumarin from salicoyl-CoA. Can also use benzoyl-CoA and malonyl-CoA to produce 3,5-dihydroxybiphenyl as a major product and benzoyldiacetic acid lactone as a minor side product. Can also use m-hydroxybenzoyl-CoA as substrate, producing m-hydroxybenzoyl diacetic acid lactone as a derailment product. No activity with p-hydroxybenzoyl-CoA, CoA-linked cinnamic acids or acetyl-CoA. This Sorbus aucuparia (European mountain ash) protein is 4-hydroxycoumarin synthase 1 (BIS2).